Consider the following 396-residue polypeptide: 8-amino-7-oxononanoate synthase (396 aa).

R29 contributes to the substrate binding site. 116 to 117 (GY) is a binding site for pyridoxal 5'-phosphate. H141 contacts substrate. Pyridoxal 5'-phosphate-binding residues include S187, H215, and T243. K246 carries the post-translational modification N6-(pyridoxal phosphate)lysine. T360 contributes to the substrate binding site.

Belongs to the class-II pyridoxal-phosphate-dependent aminotransferase family. BioF subfamily. Homodimer. Requires pyridoxal 5'-phosphate as cofactor.

The catalysed reaction is 6-carboxyhexanoyl-[ACP] + L-alanine + H(+) = (8S)-8-amino-7-oxononanoate + holo-[ACP] + CO2. The protein operates within cofactor biosynthesis; biotin biosynthesis. Catalyzes the decarboxylative condensation of pimeloyl-[acyl-carrier protein] and L-alanine to produce 8-amino-7-oxononanoate (AON), [acyl-carrier protein], and carbon dioxide. The polypeptide is 8-amino-7-oxononanoate synthase (Nitrosospira multiformis (strain ATCC 25196 / NCIMB 11849 / C 71)).